Here is a 119-residue protein sequence, read N- to C-terminus: NADH-quinone oxidoreductase subunit A (119 aa).

3 helical membrane-spanning segments follow: residues 9–29 (VLLF…LGYV), 63–83 (LVAI…PWAV), and 88–108 (VGVT…VGFA).

It belongs to the complex I subunit 3 family. In terms of assembly, NDH-1 is composed of 14 different subunits. Subunits NuoA, H, J, K, L, M, N constitute the membrane sector of the complex.

It is found in the cell inner membrane. It carries out the reaction a quinone + NADH + 5 H(+)(in) = a quinol + NAD(+) + 4 H(+)(out). NDH-1 shuttles electrons from NADH, via FMN and iron-sulfur (Fe-S) centers, to quinones in the respiratory chain. The immediate electron acceptor for the enzyme in this species is believed to be ubiquinone. Couples the redox reaction to proton translocation (for every two electrons transferred, four hydrogen ions are translocated across the cytoplasmic membrane), and thus conserves the redox energy in a proton gradient. The polypeptide is NADH-quinone oxidoreductase subunit A (Acidovorax sp. (strain JS42)).